We begin with the raw amino-acid sequence, 617 residues long: V-type proton ATPase catalytic subunit A (617 aa).

Position 136 is a phosphothreonine (Thr-136). 250-257 lines the ATP pocket; it reads GAFGCGKT. At Ser-384 the chain carries Phosphoserine; by AMPK.

This sequence belongs to the ATPase alpha/beta chains family. In terms of assembly, V-ATPase is a heteromultimeric enzyme made up of two complexes: the ATP-hydrolytic V1 complex and the proton translocation V0 complex. The V1 complex consists of three catalytic AB heterodimers that form a heterohexamer, three peripheral stalks each consisting of EG heterodimers, one central rotor including subunits D and F, and the regulatory subunits C and H. The proton translocation complex V0 consists of the proton transport subunit a, a ring of proteolipid subunits c9c'', rotary subunit d, subunits e and f, and the accessory subunits ATP6AP1/Ac45 and ATP6AP2/PRR. Interacts with the V0 complex V-ATPase subunit a4 ATP6V0A4. Interacts with WFS1. Interacts with alpha-crystallin B chain/CRYAB and with MTOR, forming a ternary complex. In terms of processing, phosphorylation at Ser-384 by AMPK down-regulates its enzyme activity. In terms of tissue distribution, expressed in brain (at protein level).

It is found in the cytoplasm. It localises to the cytosol. Its subcellular location is the cytoplasmic vesicle. The protein localises to the secretory vesicle. The protein resides in the clathrin-coated vesicle membrane. It is found in the lysosome. The enzyme catalyses ATP + H2O + 4 H(+)(in) = ADP + phosphate + 5 H(+)(out). With respect to regulation, ATP hydrolysis occurs at the interface between the nucleotide-binding domains of subunits A and B. ATP hydrolysis triggers a conformational change in the subunits D and F, which induces a shift of subunit d. The c-ring is subsequently rotated and results in a continuous proton translocation across the membrane. The V-ATPase is inhibited by bafilomycin A. Functionally, catalytic subunit of the V1 complex of vacuolar(H+)-ATPase (V-ATPase), a multisubunit enzyme composed of a peripheral complex (V1) that hydrolyzes ATP and a membrane integral complex (V0) that translocates protons. V-ATPase is responsible for acidifying and maintaining the pH of intracellular compartments and in some cell types, is targeted to the plasma membrane, where it is responsible for acidifying the extracellular environment. In aerobic conditions, involved in intracellular iron homeostasis, thus triggering the activity of Fe(2+) prolyl hydroxylase (PHD) enzymes, and leading to HIF1A hydroxylation and subsequent proteasomal degradation. May play a role in neurite development and synaptic connectivity. This is V-type proton ATPase catalytic subunit A (ATP6V1A) from Bos taurus (Bovine).